The chain runs to 212 residues: MPGSSLWLIPPPSHPLYPILSFLISQHLPSDFPSEAGAADARLIPEFFAPHMTLSSGISPDLYGDDPQRWLDSIPWPSADEVQVRFEGISSQDTYYRRCYARVKLDEGIKKIAGLARARGVNGEDDAKGAKTQEWLEWWRKEFGPHVSLMYGDVPISDDRLKEVAKVVEEAGVKLAEPEGNVEGNGWNGGVVWLVPTDRDIRDWKPIAKRVL.

Residue His-51 is the Proton donor/acceptor of the active site. Residue Thr-53 participates in substrate binding. His-146 acts as the Proton donor/acceptor in catalysis. Ser-148 and Tyr-151 together coordinate substrate.

It belongs to the 2H phosphoesterase superfamily. CPD1 family.

It is found in the golgi apparatus. It carries out the reaction a nucleoside 2',3'-cyclic phosphate + H2O = a nucleoside 2'-phosphate + H(+). Its function is as follows. Involved in the metabolism of ADP-ribose 1',2'-cyclic phosphate which is produced as a consequence of tRNA splicing. The chain is 2',3'-cyclic-nucleotide 3'-phosphodiesterase (cpd-7) from Neurospora crassa (strain ATCC 24698 / 74-OR23-1A / CBS 708.71 / DSM 1257 / FGSC 987).